A 99-amino-acid polypeptide reads, in one-letter code: Protein RnfH (99 aa).

The protein belongs to the UPF0125 (RnfH) family.

This chain is Protein RnfH, found in Buchnera aphidicola subsp. Acyrthosiphon pisum (strain 5A).